A 591-amino-acid polypeptide reads, in one-letter code: Aspartate--tRNA ligase (591 aa).

Position 171 (E171) interacts with L-aspartate. Residues 195–198 (QLFK) are aspartate. Position 217 (R217) interacts with L-aspartate. Residues 217-219 (RDE) and Q226 contribute to the ATP site. Residue H448 participates in L-aspartate binding. E482 is a binding site for ATP. Residue R489 participates in L-aspartate binding. 534 to 537 (GLDR) is an ATP binding site.

This sequence belongs to the class-II aminoacyl-tRNA synthetase family. Type 1 subfamily. In terms of assembly, homodimer.

The protein resides in the cytoplasm. It carries out the reaction tRNA(Asp) + L-aspartate + ATP = L-aspartyl-tRNA(Asp) + AMP + diphosphate. Catalyzes the attachment of L-aspartate to tRNA(Asp) in a two-step reaction: L-aspartate is first activated by ATP to form Asp-AMP and then transferred to the acceptor end of tRNA(Asp). The polypeptide is Aspartate--tRNA ligase (Vibrio cholerae serotype O1 (strain ATCC 39541 / Classical Ogawa 395 / O395)).